A 759-amino-acid chain; its full sequence is Protein hunchback (759 aa).

2 disordered regions span residues 30 to 51 (EPGH…PIPS) and 171 to 215 (SSEK…EDMK). The segment covering 39–51 (SVASSPRQSPIPS) has biased composition (polar residues). At threonine 179 the chain carries Phosphothreonine. A phosphoserine mark is found at serine 189, serine 208, serine 210, and serine 211. The segment covering 199 to 215 (EPEKEHDQMSNSSEDMK) has biased composition (basic and acidic residues). 4 C2H2-type zinc fingers span residues 241–263 (YKCK…TRTH), 270–292 (LQCP…IRKH), 298–320 (FQCD…RKSH), and 326–350 (YRCA…KYGH). 3 disordered regions span residues 366-419 (LVID…TSQL), 513-565 (QLQQ…PQQP), and 606-696 (MTSP…APAS). 2 stretches are compositionally biased toward low complexity: residues 399–419 (VAAV…TSQL) and 513–522 (QLQQQNQQQS). Residues 523-532 (DNEEEEQDDE) show a composition bias toward acidic residues. 2 positions are modified to phosphoserine: serine 537 and serine 540. Over residues 655-696 (ANTSASSTASSSGNSSNASSNGNSSSNSSSNGTSSAAAAPAS) the composition is skewed to low complexity. C2H2-type zinc fingers lie at residues 706–728 (YECK…MGYH) and 734–758 (FKCN…RNAH).

Belongs to the hunchback C2H2-type zinc-finger protein family.

The protein localises to the nucleus. Gap class segmentation protein that controls development of head structures. This chain is Protein hunchback, found in Drosophila yakuba (Fruit fly).